The primary structure comprises 362 residues: MTELLKTPIHPLYAKYGAKTIDFGGWDLPVQFAGIKAEHEAVRTDAGLFDVSHMGEILVEGPDSTSYLQYLLSNDIEKIKIGKAQYNIMCYETGGTVDDLVVYKKSETEYILVVNAANTEKDYEWMVQNIVGDVTVKNASSEFGQLALQGPNAEKILSKLTDADLSSISFFGFIEDADVAGVKTIISRSGYTGEDGFEIYMQSADAGKVFEAILAEGVAPIGLGARDTLRLEAVLALYGQELSKDITPLEAGLNFAVKLKKEADFIGKQALIKQKEAGLTRKLVGIELIERGIPRHDYPVFLNDKEIGVITSGTQSPTLGTNIGLALIDTAYTELDQELEVGIRNKKVKAKVVQTPFYKRAK.

This sequence belongs to the GcvT family. As to quaternary structure, the glycine cleavage system is composed of four proteins: P, T, L and H.

It carries out the reaction N(6)-[(R)-S(8)-aminomethyldihydrolipoyl]-L-lysyl-[protein] + (6S)-5,6,7,8-tetrahydrofolate = N(6)-[(R)-dihydrolipoyl]-L-lysyl-[protein] + (6R)-5,10-methylene-5,6,7,8-tetrahydrofolate + NH4(+). In terms of biological role, the glycine cleavage system catalyzes the degradation of glycine. This chain is Aminomethyltransferase, found in Listeria innocua serovar 6a (strain ATCC BAA-680 / CLIP 11262).